Here is a 328-residue protein sequence, read N- to C-terminus: RNA binding protein fox-1 homolog 3 (328 aa).

Positions 1–30 (MAQPYPPAQYPPPPQNGIPAEYAPPPPHPT) are enriched in pro residues. The interval 1–106 (MAQPYPPAQY…QPKRLHVSNI (106 aa)) is disordered. Over residues 49 to 87 (TPAQTHPEQPSSDTSTQPITGAQTVPQTDEAAQTDSQPL) the composition is skewed to polar residues. One can recognise an RRM domain in the interval 99-172 (KRLHVSNIPF…NPVVGAVYGP (74 aa)). Position 192 is an asymmetric dimethylarginine; alternate (Arg192). Residue Arg192 is modified to Omega-N-methylarginine; alternate. Arg288 bears the Asymmetric dimethylarginine mark.

It localises to the nucleus. The protein localises to the cytoplasm. Functionally, pre-mRNA alternative splicing regulator. Regulates alternative splicing of RBFOX2 to enhance the production of mRNA species that are targeted for nonsense-mediated decay (NMD). The chain is RNA binding protein fox-1 homolog 3 (RBFOX3) from Bos taurus (Bovine).